Consider the following 36-residue polypeptide: Peroxiredoxin-4 (36 aa).

This sequence belongs to the peroxiredoxin family. AhpC/Prx1 subfamily. In terms of assembly, homodimer; disulfide-linked, upon oxidation. In terms of tissue distribution, venom gland.

It localises to the secreted. It carries out the reaction a hydroperoxide + [thioredoxin]-dithiol = an alcohol + [thioredoxin]-disulfide + H2O. Venom peroxiredoxin enzyme that may play a role as part of a redox pathway leading to the structural/functional diversification of toxins through a disulfide bond engineering mechanism. This Crotalus atrox (Western diamondback rattlesnake) protein is Peroxiredoxin-4.